The following is a 551-amino-acid chain: Arginine--tRNA ligase (551 aa).

The 'HIGH' region motif lies at 125–135 (ANPTGPLHIGH).

The protein belongs to the class-I aminoacyl-tRNA synthetase family. Monomer.

The protein resides in the cytoplasm. It carries out the reaction tRNA(Arg) + L-arginine + ATP = L-arginyl-tRNA(Arg) + AMP + diphosphate. This Nitratidesulfovibrio vulgaris (strain ATCC 29579 / DSM 644 / CCUG 34227 / NCIMB 8303 / VKM B-1760 / Hildenborough) (Desulfovibrio vulgaris) protein is Arginine--tRNA ligase.